The chain runs to 241 residues: Leucyl/phenylalanyl-tRNA--protein transferase (241 aa).

The protein belongs to the L/F-transferase family.

The protein localises to the cytoplasm. The enzyme catalyses N-terminal L-lysyl-[protein] + L-leucyl-tRNA(Leu) = N-terminal L-leucyl-L-lysyl-[protein] + tRNA(Leu) + H(+). It catalyses the reaction N-terminal L-arginyl-[protein] + L-leucyl-tRNA(Leu) = N-terminal L-leucyl-L-arginyl-[protein] + tRNA(Leu) + H(+). The catalysed reaction is L-phenylalanyl-tRNA(Phe) + an N-terminal L-alpha-aminoacyl-[protein] = an N-terminal L-phenylalanyl-L-alpha-aminoacyl-[protein] + tRNA(Phe). Its function is as follows. Functions in the N-end rule pathway of protein degradation where it conjugates Leu, Phe and, less efficiently, Met from aminoacyl-tRNAs to the N-termini of proteins containing an N-terminal arginine or lysine. The sequence is that of Leucyl/phenylalanyl-tRNA--protein transferase from Neisseria meningitidis serogroup B (strain ATCC BAA-335 / MC58).